The following is a 1105-amino-acid chain: ATP-dependent DNA helicase MPH1 (1105 aa).

Residues 94 to 261 (IVQRAFYDNL…EIIDNLSISK (168 aa)) form the Helicase ATP-binding domain. 107-114 (LPTGLGKT) provides a ligand contact to ATP. A DEAH box motif is present at residues 209-212 (DEAH). The Helicase C-terminal domain maps to 468-641 (SIERIGSNLR…LITLAQSNRI (174 aa)). Disordered regions lie at residues 493–534 (EEAY…AQIK), 684–708 (KGKK…EKRF), 758–824 (IQSK…PKLG), 850–880 (LVTG…ECAP), and 918–953 (VSDD…FDEG). A compositionally biased stretch (basic residues) spans 499–511 (KGKKGRTKGKATK). Positions 518 to 532 (TPERSTSRTSSEDAQ) are enriched in basic and acidic residues. Basic residues predominate over residues 684–705 (KGKKVTKSKSKSKSNSKSKKIE). Residues 764–787 (PVKENQSKRPNSEHICEEDSRQET) are compositionally biased toward basic and acidic residues. The span at 788-799 (ENNSNESNGSFE) shows a compositional bias: low complexity. Over residues 927–943 (DSINNQQLHKNKNLGST) the composition is skewed to polar residues. Residues 944-953 (SDDDDAFDEG) are compositionally biased toward acidic residues.

It belongs to the DEAD box helicase family. DEAH subfamily. FANCM sub-subfamily. As to quaternary structure, interacts with the MHF histone-fold complex to form the FANCM-MHF complex.

It is found in the nucleus. The catalysed reaction is ATP + H2O = ADP + phosphate + H(+). Its function is as follows. ATP-dependent DNA helicase involved in DNA damage repair by homologous recombination and in genome maintenance. Capable of unwinding D-loops. Plays a role in limiting crossover recombinants during mitotic DNA double-strand break (DSB) repair. Component of a FANCM-MHF complex which promotes gene conversion at blocked replication forks, probably by reversal of the stalled fork. The polypeptide is ATP-dependent DNA helicase MPH1 (Debaryomyces hansenii (strain ATCC 36239 / CBS 767 / BCRC 21394 / JCM 1990 / NBRC 0083 / IGC 2968) (Yeast)).